The chain runs to 305 residues: Olfactory receptor 4F4 (305 aa).

Residues Met1–Thr18 are Extracellular-facing. The helical transmembrane segment at Phe19 to Val42 threads the bilayer. Residues Val43 to Ser50 are Cytoplasmic-facing. Residues Pro51 to Pro72 form a helical membrane-spanning segment. The Extracellular segment spans residues Lys73–Gln93. Residues Cys90 and Cys182 are joined by a disulfide bond. The helical transmembrane segment at Ile94–Phe113 threads the bilayer. Over Asp114–Asn132 the chain is Cytoplasmic. Residues Ala133–Ser151 traverse the membrane as a helical segment. Residues Gln152–Leu188 lie on the Extracellular side of the membrane. Residues Asp189–Thr212 traverse the membrane as a helical segment. At Ile213–Lys228 the chain is on the cytoplasmic side. The helical transmembrane segment at Ala229 to Tyr251 threads the bilayer. Topologically, residues Ala252–Lys262 are extracellular. A helical transmembrane segment spans residues Phe263–Leu282. The Cytoplasmic portion of the chain corresponds to Arg283–Phe305.

It belongs to the G-protein coupled receptor 1 family.

Its subcellular location is the cell membrane. Functionally, odorant receptor. In Homo sapiens (Human), this protein is Olfactory receptor 4F4 (OR4F4).